Consider the following 521-residue polypeptide: Cytochrome P450 monooxygenase ARMGADRAFT_1018420 (521 aa).

A helical membrane pass occupies residues 9-26 (VSPIWILTAIVVVAYTTV). Cysteine 443 contributes to the heme binding site. N-linked (GlcNAc...) asparagine glycosylation is present at asparagine 450.

It belongs to the cytochrome P450 family. Requires heme as cofactor.

The protein resides in the membrane. Its pathway is secondary metabolite biosynthesis. Its function is as follows. Cytochrome P450 monooxygenase, part of the gene cluster that mediates the biosynthesis of melleolides, a range of antifungal and phytotoxic polyketide derivatives composed of an orsellinic acid (OA) moiety esterified to various sesquiterpene alcohols. The first step in melleolides biosynthesis is performed by the delta(6)-protoilludene synthase PRO1 which catalyzes the cyclization of farnesyl diphosphate to protoilludene. The orsellinic acid synthase armB produces OA by condensing acetyl-CoA with 3 malonyl-CoA units in a three-round chain elongation reaction folowed by a C2-C7 ring closure. ArmB further catalyzes the trans-esterification of OA to the various sesquiterpene alcohols resulting from the hydroxylation of protoilludene. The melleolides cluster also includes 5 cytochrome P450 monooxygenases, 4 NAD(+)-dependent oxidoreductases, one flavin-dependent oxidoreductase, and one O-methyltransferase. The cytochrome P450 monooxygenases may be involved in protoilludene hydroxylation to elaborate melleolides with multiple alcohol groups, such as melleolide D, which carries alcohol functionalities at C-4, C-5, C-10, and C-13. The role of the NAD(+)-dependent enzymes remains unknown. Numerous melleolides, including arnamial, show 5'-O-methylation of the aromatic moiety which may be catalyzed by the methyltransferase encoded in the cluster. The flavin-dependent oxidoreductase might represent the dehydrogenase yielding the aldehyde in position 1 of arnamial and other melleolides. Finally, several halogenase localized outside of the cluster, are able to catalyze the transfer of a single chlorine atom to the melleolide backbone, resulting in a 6'-chloromelleolide product. In Armillaria gallica (Bulbous honey fungus), this protein is Cytochrome P450 monooxygenase ARMGADRAFT_1018420.